Consider the following 207-residue polypeptide: Probable RNA 2'-phosphotransferase (207 aa).

It belongs to the KptA/TPT1 family.

Functionally, removes the 2'-phosphate from RNA via an intermediate in which the phosphate is ADP-ribosylated by NAD followed by a presumed transesterification to release the RNA and generate ADP-ribose 1''-2''-cyclic phosphate (APPR&gt;P). May function as an ADP-ribosylase. This Methanosarcina mazei (strain ATCC BAA-159 / DSM 3647 / Goe1 / Go1 / JCM 11833 / OCM 88) (Methanosarcina frisia) protein is Probable RNA 2'-phosphotransferase.